The primary structure comprises 446 residues: Glucose-1-phosphate adenylyltransferase (446 aa).

Alpha-D-glucose 1-phosphate is bound by residues Tyr-119, Gly-184, 199 to 200 (EK), and Ser-217.

It belongs to the bacterial/plant glucose-1-phosphate adenylyltransferase family. Homotetramer.

It carries out the reaction alpha-D-glucose 1-phosphate + ATP + H(+) = ADP-alpha-D-glucose + diphosphate. It participates in glycan biosynthesis; glycogen biosynthesis. Involved in the biosynthesis of ADP-glucose, a building block required for the elongation reactions to produce glycogen. Catalyzes the reaction between ATP and alpha-D-glucose 1-phosphate (G1P) to produce pyrophosphate and ADP-Glc. In Rhodopirellula baltica (strain DSM 10527 / NCIMB 13988 / SH1), this protein is Glucose-1-phosphate adenylyltransferase.